Reading from the N-terminus, the 492-residue chain is 2-succinylbenzoate--CoA ligase (492 aa).

This sequence belongs to the ATP-dependent AMP-binding enzyme family. MenE subfamily.

It carries out the reaction 2-succinylbenzoate + ATP + CoA = 2-succinylbenzoyl-CoA + AMP + diphosphate. It participates in quinol/quinone metabolism; 1,4-dihydroxy-2-naphthoate biosynthesis; 1,4-dihydroxy-2-naphthoate from chorismate: step 5/7. It functions in the pathway quinol/quinone metabolism; menaquinone biosynthesis. In terms of biological role, converts 2-succinylbenzoate (OSB) to 2-succinylbenzoyl-CoA (OSB-CoA). The sequence is that of 2-succinylbenzoate--CoA ligase from Staphylococcus aureus (strain USA300 / TCH1516).